The following is a 287-amino-acid chain: X-box-binding protein 1 (287 aa).

The region spanning 61-117 (EEKMDRRKLKNRVAAQNARDKKKERSAKIEDVMRDLVEENRRLRAENERLRRQNKNL) is the bZIP domain. A disordered region spans residues 63 to 87 (KMDRRKLKNRVAAQNARDKKKERSA). A basic motif region spans residues 63–88 (KMDRRKLKNRVAAQNARDKKKERSAK). The segment covering 78–87 (ARDKKKERSA) has biased composition (basic and acidic residues). The segment at 89-117 (IEDVMRDLVEENRRLRAENERLRRQNKNL) is leucine-zipper.

In terms of assembly, interacts with SUMO-conjugating enzyme ubc-9; the interaction is direct. Post-translationally, sumoylated. Sumoylation may negatively modulate the transcription of genes involved in the ER-stress-response.

Its subcellular location is the nucleus. Required for transcriptional regulation of the unfolded protein response (UPR) in the endoplasmic reticulum (ER) under stressed conditions, acting downstream of ire-1, and also maintaining ER homeostasis via a negative feedback loop, in parallel with ER kinase pek-1. May also regulate Golgi protein trafficking distal to the ER. Protects the host organism from the detrimental effects of mounting an innate immune response to microbes, such as the Gram-negative bacterium P.aeruginosa, probably by modulating the UPR. Functionally, plays a role in the unconventional cytoplasmic splicing processing of its own mRNA triggered by the endoplasmic reticulum (ER) transmembrane endoribonuclease ire-1: upon ER stress, the emerging xbp-1 polypeptide chain, as part of a mRNA-ribosome-nascent chain (R-RNC) complex, cotranslationally recruits its own unprocessed mRNA through transient docking to the ER membrane and translational pausing, therefore facilitating efficient ire-1-mediated xbp-1 mRNA isoform 2 production. In terms of biological role, functions as a stress-inducible potent transcriptional activator during endoplasmic reticulum (ER) stress by inducing unfolded protein response (UPR) target genes via binding to the UPR element (UPRE). Plays a role in modulation of the UPR, lipid metabolism, proteostasis, and lifespan. In neurons, rescues stress resistance, increases longevity, and, drives expression of lysosomal genes in the intestine and activates the UPR in distal, non-neuronal cell types through a cell-nonautonomous mechanism. In neurons or intestine, plays a role in protection against proteotoxicity, acting via positive modulation of genes involved in lysosomal function, including lipases and the fatty-acid desaturase fat-6. Protection against proteotoxicity in neurons is dependent upon the transcription factor atf-6. This Caenorhabditis elegans protein is X-box-binding protein 1.